The primary structure comprises 476 residues: Proline--tRNA ligase 2 (476 aa).

The protein belongs to the class-II aminoacyl-tRNA synthetase family. ProS type 3 subfamily. Homodimer.

The protein localises to the cytoplasm. The catalysed reaction is tRNA(Pro) + L-proline + ATP = L-prolyl-tRNA(Pro) + AMP + diphosphate. Catalyzes the attachment of proline to tRNA(Pro) in a two-step reaction: proline is first activated by ATP to form Pro-AMP and then transferred to the acceptor end of tRNA(Pro). In Bacillus cereus (strain ATCC 10987 / NRS 248), this protein is Proline--tRNA ligase 2.